The chain runs to 1833 residues: Proteasome activator complex subunit 4A (1833 aa).

HEAT repeat units lie at residues 460–504 (PEGP…LVDC) and 983–1022 (NFCC…NHSG). Positions 1095–1122 (SSSPEPNPGAASEQEELEGRKREEQKNK) are disordered. Positions 1111–1122 (LEGRKREEQKNK) are enriched in basic and acidic residues. HEAT repeat units lie at residues 1164-1202 (LPLP…QLKR), 1344-1382 (DAFL…GSKH), 1626-1664 (SDQI…YNLF), and 1670-1708 (AKAV…CNFL). Positions 1640–1728 (SRSSSWHARY…ESLSKTRLPK (89 aa)) are bromodomain-like (BRDL).

This sequence belongs to the BLM10 family. As to quaternary structure, homodimer. Interacts with the 20S and 26S proteasomes.

The protein resides in the cytoplasm. It is found in the cytosol. It localises to the nucleus. The protein localises to the nucleus speckle. Its function is as follows. Associated component of the proteasome that specifically recognizes acetylated histones and promotes ATP- and ubiquitin-independent degradation of core histones during DNA damage response. Recognizes and binds acetylated histones via its bromodomain-like (BRDL) region and activates the proteasome by opening the gated channel for substrate entry. Binds to the core proteasome via its C-terminus, which occupies the same binding sites as the proteasomal ATPases, opening the closed structure of the proteasome via an active gating mechanism. involved in DNA damage response in somatic cells: binds to acetylated histones and promotes degradation of histones. This Danio rerio (Zebrafish) protein is Proteasome activator complex subunit 4A (psme4a).